The chain runs to 130 residues: MSGRGKQGGKTRAKAKTRSSRAGLQFPVGRVHRLLRKGNYAERVGAGAPVYLAAVLEYLTAEILELAGNAARDNKKTRIIPRHLQLAVRNDEELNKLLGGVTIAQGGVLPNIQSVLLPKKTESAKSAKSK.

The interval 1–22 (MSGRGKQGGKTRAKAKTRSSRA) is disordered. The residue at position 2 (S2) is an N-acetylserine. Phosphoserine is present on S2. An N6-(2-hydroxyisobutyryl)lysine modification is found at K6. K6 bears the N6-acetyllysine mark. Positions 7–19 (QGGKTRAKAKTRS) are enriched in basic residues. K10 is modified (N6-(2-hydroxyisobutyryl)lysine; alternate). K10 is modified (N6-lactoyllysine; alternate). N6-succinyllysine is present on K10. Glycyl lysine isopeptide (Lys-Gly) (interchain with G-Cter in ubiquitin) cross-links involve residues K14 and K16. The residue at position 37 (K37) is an N6-(2-hydroxyisobutyryl)lysine; alternate. K75 and K76 each carry N6-(2-hydroxyisobutyryl)lysine. An N6-(2-hydroxyisobutyryl)lysine; alternate modification is found at K96. Position 96 is an N6-succinyllysine (K96). The residue at position 96 (K96) is an N6-glutaryllysine; alternate. At Q105 the chain carries N5-methylglutamine. K119 carries the post-translational modification N6-(2-hydroxyisobutyryl)lysine; alternate. K119 carries the post-translational modification N6-glutaryllysine; alternate. A Glycyl lysine isopeptide (Lys-Gly) (interchain with G-Cter in ubiquitin) cross-link involves residue K120.

This sequence belongs to the histone H2A family. As to quaternary structure, the nucleosome is a histone octamer containing two molecules each of H2A, H2B, H3 and H4 assembled in one H3-H4 heterotetramer and two H2A-H2B heterodimers. The octamer wraps approximately 147 bp of DNA. Monoubiquitination of Lys-120 (H2AK119Ub) gives a specific tag for epigenetic transcriptional repression. Following DNA double-strand breaks (DSBs), it is ubiquitinated through 'Lys-63' linkage of ubiquitin moieties, leading to the recruitment of repair proteins to sites of DNA damage. H2AK119Ub and ionizing radiation-induced 'Lys-63'-linked ubiquitination are distinct events. Post-translationally, phosphorylation on Ser-2 is enhanced during mitosis. Phosphorylation on Ser-2 directly represses transcription. In terms of processing, glutamine methylation at Gln-105 (H2AQ104me) by FBL is specifically dedicated to polymerase I. It is present at 35S ribosomal DNA locus and impairs binding of the FACT complex.

Its subcellular location is the nucleus. It is found in the chromosome. Its function is as follows. Core component of nucleosome. Nucleosomes wrap and compact DNA into chromatin, limiting DNA accessibility to the cellular machineries which require DNA as a template. Histones thereby play a central role in transcription regulation, DNA repair, DNA replication and chromosomal stability. DNA accessibility is regulated via a complex set of post-translational modifications of histones, also called histone code, and nucleosome remodeling. This is Histone H2A type 1 from Xenopus laevis (African clawed frog).